A 322-amino-acid chain; its full sequence is ATP-dependent 6-phosphofructokinase (322 aa).

Residues Gly-12, 73–74 (RF), and 103–106 (GDGT) each bind ATP. Asp-104 provides a ligand contact to Mg(2+). Residue 126–128 (TID) coordinates substrate. Catalysis depends on Asp-128, which acts as the Proton acceptor. Arg-155 serves as a coordination point for ADP. Residues Arg-163 and 170–172 (MGR) contribute to the substrate site. Residues 186–188 (GSE), Lys-212, and 214–216 (KPS) contribute to the ADP site. Residues Glu-223, Arg-245, and 251–254 (HTQR) contribute to the substrate site.

The protein belongs to the phosphofructokinase type A (PFKA) family. ATP-dependent PFK group I subfamily. Prokaryotic clade 'B1' sub-subfamily. Homotetramer. Mg(2+) serves as cofactor.

It localises to the cytoplasm. The catalysed reaction is beta-D-fructose 6-phosphate + ATP = beta-D-fructose 1,6-bisphosphate + ADP + H(+). Its pathway is carbohydrate degradation; glycolysis; D-glyceraldehyde 3-phosphate and glycerone phosphate from D-glucose: step 3/4. Its activity is regulated as follows. Allosterically activated by ADP and other diphosphonucleosides, and allosterically inhibited by phosphoenolpyruvate. Its function is as follows. Catalyzes the phosphorylation of D-fructose 6-phosphate to fructose 1,6-bisphosphate by ATP, the first committing step of glycolysis. This is ATP-dependent 6-phosphofructokinase from Mesomycoplasma hyopneumoniae (strain 232) (Mycoplasma hyopneumoniae).